The primary structure comprises 205 residues: Probable anaerobic dimethyl sulfoxide reductase chain YnfG (205 aa).

4Fe-4S ferredoxin-type domains are found at residues 5–33, 59–89, and 90–119; these read YGFF…LGPE, FAYY…KRED, and GFVV…YNAE. 16 residues coordinate [4Fe-4S] cluster: C14, C17, C20, C24, C67, C70, C75, C79, C99, C102, C105, C109, C126, C129, C141, and C145. A disordered region spans residues 183–205; it reads IKPNANSRPTGDTTGYLANPEEV. Positions 186–195 are enriched in polar residues; the sequence is NANSRPTGDT.

In terms of assembly, the complex consists of three subunits: YnfF, the reductase; YnfG, an electron transfer protein, and YnfH, a membrane anchor protein. It depends on [4Fe-4S] cluster as a cofactor.

Functionally, electron transfer subunit of the terminal reductase during anaerobic growth on various sulfoxide and N-oxide compounds. This Escherichia coli O6:H1 (strain CFT073 / ATCC 700928 / UPEC) protein is Probable anaerobic dimethyl sulfoxide reductase chain YnfG (ynfG).